The following is a 371-amino-acid chain: Homoserine O-acetyltransferase (371 aa).

In terms of domain architecture, AB hydrolase-1 spans 44–350; sequence NAILVEHAWT…SYGHDAFLLE (307 aa). Serine 150 acts as the Nucleophile in catalysis. Residue arginine 217 coordinates substrate. Active-site residues include aspartate 311 and histidine 344. Aspartate 345 contributes to the substrate binding site.

This sequence belongs to the AB hydrolase superfamily. MetX family. In terms of assembly, homodimer.

The protein resides in the cytoplasm. The catalysed reaction is L-homoserine + acetyl-CoA = O-acetyl-L-homoserine + CoA. The protein operates within amino-acid biosynthesis; L-methionine biosynthesis via de novo pathway; O-acetyl-L-homoserine from L-homoserine: step 1/1. In terms of biological role, transfers an acetyl group from acetyl-CoA to L-homoserine, forming acetyl-L-homoserine. This chain is Homoserine O-acetyltransferase, found in Pelobacter propionicus (strain DSM 2379 / NBRC 103807 / OttBd1).